Reading from the N-terminus, the 545-residue chain is CTP synthase (545 aa).

The tract at residues 1-266 is amidoligase domain; sequence MTTKYIFVTG…DSYFTERFGL (266 aa). Serine 14 is a CTP binding site. Serine 14 contacts UTP. ATP-binding positions include 15–20 and aspartate 72; that span reads SLGKGI. Mg(2+) contacts are provided by aspartate 72 and glutamate 140. CTP-binding positions include 147–149, 187–192, and lysine 223; these read DIE and KTKPTQ. UTP-binding positions include 187 to 192 and lysine 223; that span reads KTKPTQ. 239 to 241 contributes to the ATP binding site; the sequence is KDV. The region spanning 291–542 is the Glutamine amidotransferase type-1 domain; that stretch reads TIGMVGKYVS…VKAAGEYQKR (252 aa). Residue glycine 352 participates in L-glutamine binding. Cysteine 379 serves as the catalytic Nucleophile; for glutamine hydrolysis. L-glutamine contacts are provided by residues 380–383, glutamate 403, and arginine 470; that span reads LGMQ. Catalysis depends on residues histidine 515 and glutamate 517.

This sequence belongs to the CTP synthase family. In terms of assembly, homotetramer.

The enzyme catalyses UTP + L-glutamine + ATP + H2O = CTP + L-glutamate + ADP + phosphate + 2 H(+). It catalyses the reaction L-glutamine + H2O = L-glutamate + NH4(+). The catalysed reaction is UTP + NH4(+) + ATP = CTP + ADP + phosphate + 2 H(+). The protein operates within pyrimidine metabolism; CTP biosynthesis via de novo pathway; CTP from UDP: step 2/2. With respect to regulation, allosterically activated by GTP, when glutamine is the substrate; GTP has no effect on the reaction when ammonia is the substrate. The allosteric effector GTP functions by stabilizing the protein conformation that binds the tetrahedral intermediate(s) formed during glutamine hydrolysis. Inhibited by the product CTP, via allosteric rather than competitive inhibition. Functionally, catalyzes the ATP-dependent amination of UTP to CTP with either L-glutamine or ammonia as the source of nitrogen. Regulates intracellular CTP levels through interactions with the four ribonucleotide triphosphates. This chain is CTP synthase, found in Aeromonas hydrophila subsp. hydrophila (strain ATCC 7966 / DSM 30187 / BCRC 13018 / CCUG 14551 / JCM 1027 / KCTC 2358 / NCIMB 9240 / NCTC 8049).